The primary structure comprises 1116 residues: Auxin response factor 21 (1116 aa).

The segment at residues 132 to 234 is a DNA-binding region (TF-B3); the sequence is FCKTLTASDT…QLLLGIRRAN (103 aa). Residues 763–812 form a disordered region; the sequence is KTDDVPSTSTSPSTNSNPVLLQSIPSSSKNQSLTTAGKTSQSSVVLGPTI. Over residues 768-780 the composition is skewed to low complexity; that stretch reads PSTSTSPSTNSNP. Residues 781-806 are compositionally biased toward polar residues; that stretch reads VLLQSIPSSSKNQSLTTAGKTSQSSV. Residues 998 to 1082 form the PB1 domain; the sequence is RTYTKVHKRG…RCIRILSPQE (85 aa).

The protein belongs to the ARF family. In terms of assembly, homodimers and heterodimers. In terms of tissue distribution, expressed in roots, culms, leaves and young panicles.

The protein resides in the nucleus. Functionally, auxin response factors (ARFs) are transcriptional factors that bind specifically to the DNA sequence 5'-TGTCTC-3' found in the auxin-responsive promoter elements (AuxREs). The chain is Auxin response factor 21 (ARF21) from Oryza sativa subsp. japonica (Rice).